We begin with the raw amino-acid sequence, 266 residues long: Undecaprenyl-diphosphatase (266 aa).

8 helical membrane passes run 1–21 (MDTF…FLPI), 39–59 (QGLS…VIYF), 87–107 (WWII…KDFI), 111–131 (LRSA…LWWA), 149–169 (ALLI…RSGA), 183–203 (AAAR…AILV), 218–238 (ALTL…HYFL), and 246–266 (MTPF…FIFL).

The protein belongs to the UppP family.

Its subcellular location is the cell inner membrane. The enzyme catalyses di-trans,octa-cis-undecaprenyl diphosphate + H2O = di-trans,octa-cis-undecaprenyl phosphate + phosphate + H(+). Catalyzes the dephosphorylation of undecaprenyl diphosphate (UPP). Confers resistance to bacitracin. This is Undecaprenyl-diphosphatase from Shewanella putrefaciens (strain CN-32 / ATCC BAA-453).